We begin with the raw amino-acid sequence, 489 residues long: GDP-fucose protein O-fucosyltransferase 4 (489 aa).

Residues 1–7 (MAARCTE) are Cytoplasmic-facing. Residues 8-24 (AVLAALGVLSVCSASSS) form a helical; Signal-anchor for type II membrane protein membrane-spanning segment. Topologically, residues 25–489 (GSEASGEAER…EIFMKRNKNL (465 aa)) are lumenal. Residue Asn-162 is glycosylated (N-linked (GlcNAc...) asparagine). A disulfide bridge links Cys-385 with Cys-388.

The protein belongs to the glycosyltransferase 10 family. Widely expressed. Expressed at slightly higher level in heart, kidney and lung.

It localises to the endoplasmic reticulum membrane. It catalyses the reaction L-threonyl-[protein] + GDP-beta-L-fucose = 3-O-(alpha-L-fucosyl)-L-threonyl-[protein] + GDP + H(+). The enzyme catalyses L-seryl-[protein] + GDP-beta-L-fucose = 3-O-(alpha-L-fucosyl)-L-seryl-[protein] + GDP + H(+). The protein operates within protein modification; protein glycosylation. Protein O-fucosyltransferase that specifically catalyzes O-fucosylation of serine or threonine residues in EMI domains of target proteins, such as MMRN1, MMRN2 and EMID1. Attaches fucose through an O-glycosidic linkage. O-fucosylation of EMI domain-containing proteins may be required for facilitating protein folding and secretion. Also shows minor alpha-(1,3)-fucosyltransferase activity toward activity toward biantennary N-glycan acceptors. However, this was tested with a library of synthetic substrates and this activity is unsure in vivo. The chain is GDP-fucose protein O-fucosyltransferase 4 (Fut11) from Mus musculus (Mouse).